We begin with the raw amino-acid sequence, 357 residues long: DNA integrity scanning protein DisA (357 aa).

The 139-residue stretch at 8 to 146 (VKSMINILQL…GNLRYTLKDI (139 aa)) folds into the DAC domain. ATP is bound by residues G75, L93, and 106–110 (MRHRT).

This sequence belongs to the DisA family. Homooctamer. Requires Mg(2+) as cofactor.

It carries out the reaction 2 ATP = 3',3'-c-di-AMP + 2 diphosphate. Participates in a DNA-damage check-point that is active prior to asymmetric division when DNA is damaged. DisA forms globular foci that rapidly scan along the chromosomes during sporulation, searching for lesions. When a lesion is present, DisA pauses at the lesion site. This triggers a cellular response that culminates in a temporary block in sporulation initiation. Functionally, also has diadenylate cyclase activity, catalyzing the condensation of 2 ATP molecules into cyclic di-AMP (c-di-AMP). c-di-AMP acts as a signaling molecule that couples DNA integrity with progression of sporulation. The rise in c-di-AMP level generated by DisA while scanning the chromosome, operates as a positive signal that advances sporulation; upon encountering a lesion, the DisA focus arrests at the damaged site and halts c-di-AMP synthesis. The chain is DNA integrity scanning protein DisA from Bacillus mycoides (strain KBAB4) (Bacillus weihenstephanensis).